Here is a 632-residue protein sequence, read N- to C-terminus: Myrcene synthase TPS3FN, chloroplastic (632 aa).

The transit peptide at 1–55 (MHCMAVHQFSPSIVSSLPTISTYNNNHFCRFFTPKTSISPISKTKSKSSTCYPIQ) directs the protein to the chloroplast. Residues Arg-343, Asp-380, Asp-384, Arg-524, and Asp-527 each contribute to the (2E)-geranyl diphosphate site. Positions 380 and 384 each coordinate Mg(2+). The DDXXD motif signature appears at 380–384 (DDIYD). Residues Asp-527, Thr-531, and Glu-535 each contribute to the Mg(2+) site.

The protein belongs to the terpene synthase family. Tpsb subfamily. Requires Mg(2+) as cofactor. It depends on Mn(2+) as a cofactor. As to expression, expressed in glandular trichomes two to four weeks after flowering onset.

It localises to the plastid. It is found in the chloroplast. The enzyme catalyses (2E)-geranyl diphosphate = beta-myrcene + diphosphate. It participates in secondary metabolite biosynthesis; terpenoid biosynthesis. Involved in monoterpene (C10) olefins biosynthesis, constituants of cannabinoids and terpenoids-rich resins. Catalyzes strictly the conversion of (2E)-geranyl diphosphate to beta-myrcene. In Cannabis sativa (Hemp), this protein is Myrcene synthase TPS3FN, chloroplastic.